Here is a 1388-residue protein sequence, read N- to C-terminus: Rho-associated protein kinase 2 (1388 aa).

The disordered stretch occupies residues 1–27; sequence MSRPPPTGKMPGAPETAPGDGAGASRQ. The Protein kinase domain occupies 92–354; that stretch reads YDVVKVIGRG…VEEIRQHPFF (263 aa). ATP is bound by residues 98 to 106 and Lys121; that span reads IGRGAFGEV. The Proton acceptor role is filled by Asp214. The 69-residue stretch at 357-425 folds into the AGC-kinase C-terminal domain; it reads DQWHWDNIRE…YRENLLLSDS (69 aa). An interaction with PPP1R12A region spans residues 363 to 784; that stretch reads NIRETAAPVV…INELLKQKDV (422 aa). Residues 373-420 are interaction with NPM1; the sequence is PELSSDIDSSNFDDIEDDKGDVETFPIPKAFVGNQLPFIGFTYYRENL. Thr414 bears the Phosphothreonine; by ROCK2 mark. Coiled coils occupy residues 429-1024 and 1053-1131; these read RETD…EKQL and DTDV…IGLD. The REM-1 domain occupies 497–573; the sequence is ALRQLEREKA…LDETNALLRT (77 aa). Tyr722 bears the Phosphotyrosine; by SRC mark. Positions 979–1047 constitute a RhoBD domain; it reads TSDVANLANE…LAEIMNRKEP (69 aa). Positions 979 to 1047 are RHOA binding; it reads TSDVANLANE…LAEIMNRKEP (69 aa). Ser1137 is subject to Phosphoserine. A PH domain is found at 1150–1349; it reads ESRLEGWLSL…WVSRLVKKIP (200 aa). Thr1212 is modified (phosphothreonine). The segment at 1260 to 1315 adopts a Phorbol-ester/DAG-type zinc-finger fold; the sequence is GHEFIPTLYHFPTNCEACMKPLWHMFKPPPALECRRCHIKCHKDHMDKKEEIIAPC. The disordered stretch occupies residues 1345–1388; sequence VKKIPKKPPAPDPFARSSPRTSMKIQQNQSIRRPSRQLAPNKPS. Residues Ser1362 and Ser1374 each carry the phosphoserine modification. Residues 1362 to 1376 show a composition bias toward polar residues; the sequence is SPRTSMKIQQNQSIR.

The protein belongs to the protein kinase superfamily. AGC Ser/Thr protein kinase family. As to quaternary structure, homodimer. Interacts with IRS1. Interacts with RAF1. Interacts with RHOA (activated by GTP), RHOB and RHOC. Interacts with PPP1R12A. Interacts with EP300. Interacts with CHORDC1. Interacts with BRCA2. Interacts with NPM1; this interaction enhances ROCK2 activity. Interacts with SORL1. Interacts with PJVK. It depends on Mg(2+) as a cofactor. Phosphorylation at Tyr-722 reduces its binding to RHOA and is crucial for focal adhesion dynamics. Dephosphorylation by PTPN11 stimulates its RHOA binding activity. In terms of processing, cleaved by granzyme B during apoptosis. This leads to constitutive activation of the kinase and membrane blebbing. As to expression, expressed in the brain (at protein level).

It is found in the cytoplasm. The protein resides in the cell membrane. Its subcellular location is the nucleus. The protein localises to the cytoskeleton. It localises to the microtubule organizing center. It is found in the centrosome. The enzyme catalyses L-seryl-[protein] + ATP = O-phospho-L-seryl-[protein] + ADP + H(+). It carries out the reaction L-threonyl-[protein] + ATP = O-phospho-L-threonyl-[protein] + ADP + H(+). Activated by RHOA binding. Inhibited by Y-27632. Its function is as follows. Protein kinase which is a key regulator of actin cytoskeleton and cell polarity. Involved in regulation of smooth muscle contraction, actin cytoskeleton organization, stress fiber and focal adhesion formation, neurite retraction, cell adhesion and motility via phosphorylation of ADD1, BRCA2, CNN1, EZR, DPYSL2, EP300, MSN, MYL9/MLC2, NPM1, RDX, PPP1R12A and VIM. Phosphorylates SORL1 and IRF4. Acts as a negative regulator of VEGF-induced angiogenic endothelial cell activation. Positively regulates the activation of p42/MAPK1-p44/MAPK3 and of p90RSK/RPS6KA1 during myogenic differentiation. Plays an important role in the timely initiation of centrosome duplication. Inhibits keratinocyte terminal differentiation. May regulate closure of the eyelids and ventral body wall through organization of actomyosin bundles. Plays a critical role in the regulation of spine and synaptic properties in the hippocampus. Plays an important role in generating the circadian rhythm of the aortic myofilament Ca(2+) sensitivity and vascular contractility by modulating the myosin light chain phosphorylation. This is Rho-associated protein kinase 2 (ROCK2) from Homo sapiens (Human).